We begin with the raw amino-acid sequence, 347 residues long: NADH-ubiquinone oxidoreductase chain 2 (347 aa).

9 helical membrane-spanning segments follow: residues 3-23 (PPIL…VLMS), 25-45 (HWLM…PILM), 67-87 (SMLL…WAVL), 150-170 (NPHL…WGGL), 178-198 (ILAY…TYSP), 201-221 (MLLN…LFMF), 237-257 (LPLI…LPPL), 274-294 (NMII…YFYM), and 323-343 (MTML…TPMM).

Belongs to the complex I subunit 2 family. Core subunit of respiratory chain NADH dehydrogenase (Complex I) which is composed of 45 different subunits. Interacts with TMEM242.

Its subcellular location is the mitochondrion inner membrane. It catalyses the reaction a ubiquinone + NADH + 5 H(+)(in) = a ubiquinol + NAD(+) + 4 H(+)(out). Functionally, core subunit of the mitochondrial membrane respiratory chain NADH dehydrogenase (Complex I) which catalyzes electron transfer from NADH through the respiratory chain, using ubiquinone as an electron acceptor. Essential for the catalytic activity and assembly of complex I. In Mustela kathiah (Yellow-bellied weasel), this protein is NADH-ubiquinone oxidoreductase chain 2.